Here is a 404-residue protein sequence, read N- to C-terminus: Schlafen-like protein 1 (404 aa).

Disordered regions lie at residues 1–31 (MTPMKRSVQTQVSEPFTESWGEESLPELPTE) and 139–170 (GPLSHREEEEEDSGLSPGPNPGSGVPLPAWPT). Polar residues predominate over residues 7–16 (SVQTQVSEPF). A compositionally biased stretch (low complexity) spans 152 to 165 (GLSPGPNPGSGVPL). 258–265 (GVEDSGLV) lines the ATP pocket. A coiled-coil region spans residues 365 to 395 (RWLVELGKLEERVKVLTMEKEQLQQQLQQHG).

This sequence belongs to the Schlafen family. Subgroup I subfamily.

The sequence is that of Schlafen-like protein 1 (SLFNL1) from Macaca fascicularis (Crab-eating macaque).